Here is a 504-residue protein sequence, read N- to C-terminus: Cytochrome P450 3A16 (504 aa).

Residue Cys443 coordinates heme.

Belongs to the cytochrome P450 family. Requires heme as cofactor.

It localises to the endoplasmic reticulum membrane. It is found in the microsome membrane. The catalysed reaction is an organic molecule + reduced [NADPH--hemoprotein reductase] + O2 = an alcohol + oxidized [NADPH--hemoprotein reductase] + H2O + H(+). Cytochromes P450 are a group of heme-thiolate monooxygenases. In liver microsomes, this enzyme is involved in an NADPH-dependent electron transport pathway. It oxidizes a variety of structurally unrelated compounds, including steroids, fatty acids, and xenobiotics. This is Cytochrome P450 3A16 (Cyp3a16) from Mus musculus (Mouse).